The sequence spans 326 residues: MILATKVFFTSFVFGFILFPYFIKLLKKISKDGQPIRSCGPESHLITKKNVPPMGGIIILTSSLLPILLWVQLTPEILLLILITLFFALLGFIDDYLKLKTNHYRGLSAKTKILIQFIVALVGVFILKLYSAECFTKTSLFKGVIIDFGYLYVPFAAFVIVGSSNAVNLTDGLDGLAATQVITSFAFLGLIAYITQADMNITLFCIAFIGAILSFLWFNTHPAKIFMGDVGSLSVGAALGLTSVLIKREMLFAVIGIIFVIETLSVIIQISYFKYTKFKYGEGKRVFLMAPMHHHFEKKGWSENVIVMKFWIISIICSVFTITFLL.

A run of 10 helical transmembrane segments spans residues 2–22, 51–71, 73–93, 113–133, 143–163, 175–195, 199–219, 225–245, 250–270, and 305–325; these read ILAT…FPYF, VPPM…LLWV, LTPE…LGFI, ILIQ…YSAE, GVII…IVGS, GLAA…AYIT, MNIT…LWFN, IFMG…TSVL, MLFA…IIQI, and VIVM…ITFL.

The protein belongs to the glycosyltransferase 4 family. MraY subfamily. Mg(2+) serves as cofactor.

Its subcellular location is the cell membrane. It carries out the reaction UDP-N-acetyl-alpha-D-muramoyl-L-alanyl-gamma-D-glutamyl-meso-2,6-diaminopimeloyl-D-alanyl-D-alanine + di-trans,octa-cis-undecaprenyl phosphate = di-trans,octa-cis-undecaprenyl diphospho-N-acetyl-alpha-D-muramoyl-L-alanyl-D-glutamyl-meso-2,6-diaminopimeloyl-D-alanyl-D-alanine + UMP. Its pathway is cell wall biogenesis; peptidoglycan biosynthesis. Catalyzes the initial step of the lipid cycle reactions in the biosynthesis of the cell wall peptidoglycan: transfers peptidoglycan precursor phospho-MurNAc-pentapeptide from UDP-MurNAc-pentapeptide onto the lipid carrier undecaprenyl phosphate, yielding undecaprenyl-pyrophosphoryl-MurNAc-pentapeptide, known as lipid I. The sequence is that of Phospho-N-acetylmuramoyl-pentapeptide-transferase from Wolbachia sp. subsp. Drosophila simulans (strain wRi).